We begin with the raw amino-acid sequence, 90 residues long: Sec-independent protein translocase protein TatA (90 aa).

A helical transmembrane segment spans residues 1–21 (MGSMSIWHWVIVAVIVMLLFG). Residues 44 to 90 (AEDETPPAVQAAPPPAEPVRTIPHATETSPGTAIPASHLPGGERKPV) form a disordered region.

This sequence belongs to the TatA/E family. In terms of assembly, the Tat system comprises two distinct complexes: a TatABC complex, containing multiple copies of TatA, TatB and TatC subunits, and a separate TatA complex, containing only TatA subunits. Substrates initially bind to the TatABC complex, which probably triggers association of the separate TatA complex to form the active translocon.

Its subcellular location is the cell inner membrane. Part of the twin-arginine translocation (Tat) system that transports large folded proteins containing a characteristic twin-arginine motif in their signal peptide across membranes. TatA could form the protein-conducting channel of the Tat system. The polypeptide is Sec-independent protein translocase protein TatA (Methylobacterium radiotolerans (strain ATCC 27329 / DSM 1819 / JCM 2831 / NBRC 15690 / NCIMB 10815 / 0-1)).